Consider the following 117-residue polypeptide: Large ribosomal subunit protein bL20c (117 aa).

The protein belongs to the bacterial ribosomal protein bL20 family.

It is found in the plastid. It localises to the chloroplast. Functionally, binds directly to 23S ribosomal RNA and is necessary for the in vitro assembly process of the 50S ribosomal subunit. It is not involved in the protein synthesizing functions of that subunit. The sequence is that of Large ribosomal subunit protein bL20c from Chloranthus spicatus (Chulantree).